A 640-amino-acid chain; its full sequence is 1-deoxy-D-xylulose-5-phosphate synthase (640 aa).

Residues His-75 and 117–119 (GHA) each bind thiamine diphosphate. Asp-146 is a Mg(2+) binding site. Residues 147-148 (AA), Asn-175, and Glu-370 each bind thiamine diphosphate. Asn-175 contributes to the Mg(2+) binding site.

This sequence belongs to the transketolase family. DXPS subfamily. As to quaternary structure, homodimer. Mg(2+) serves as cofactor. Thiamine diphosphate is required as a cofactor.

The catalysed reaction is D-glyceraldehyde 3-phosphate + pyruvate + H(+) = 1-deoxy-D-xylulose 5-phosphate + CO2. The protein operates within metabolic intermediate biosynthesis; 1-deoxy-D-xylulose 5-phosphate biosynthesis; 1-deoxy-D-xylulose 5-phosphate from D-glyceraldehyde 3-phosphate and pyruvate: step 1/1. Its function is as follows. Catalyzes the acyloin condensation reaction between C atoms 2 and 3 of pyruvate and glyceraldehyde 3-phosphate to yield 1-deoxy-D-xylulose-5-phosphate (DXP). The protein is 1-deoxy-D-xylulose-5-phosphate synthase of Chlamydia trachomatis serovar A (strain ATCC VR-571B / DSM 19440 / HAR-13).